The primary structure comprises 146 residues: Hemoglobin subunit beta-1 (146 aa).

The region spanning 2 to 146 (KWSDKERAVI…VVSALGKQYC (145 aa)) is the Globin domain. Positions 63 and 92 each coordinate heme b.

This sequence belongs to the globin family. Hb1 is a heterotetramer of two alpha-1 chains and two beta-1 chains; Hb2 is a heterotetramer of two alpha-2 chains and two beta-1 chains. As to expression, red blood cells.

Involved in oxygen transport from gills to the various peripheral tissues. This Anarhichas minor (Arctic spotted wolffish) protein is Hemoglobin subunit beta-1 (hbb1).